Here is a 234-residue protein sequence, read N- to C-terminus: Prolactin-6A1 (234 aa).

Positions 1 to 33 (MVKSWLRMSKKMEAGTLLMLLMSNILLWENVAS) are cleaved as a signal peptide. N-linked (GlcNAc...) asparagine glycosylation occurs at Asn61. Intrachain disulfides connect Cys93-Cys209 and Cys226-Cys234.

This sequence belongs to the somatotropin/prolactin family.

It is found in the secreted. This Rattus norvegicus (Rat) protein is Prolactin-6A1 (Prl6a1).